We begin with the raw amino-acid sequence, 297 residues long: uncharacterized protein (297 aa).

A helical transmembrane segment spans residues 191 to 211 (VMIILSCSNITILAVLSIVGL). The span at 275–287 (SKTSETQSVSGST) shows a compositional bias: polar residues. Residues 275–297 (SKTSETQSVSGSTHSDEKLTAPM) form a disordered region. Basic and acidic residues predominate over residues 288–297 (HSDEKLTAPM).

The protein localises to the host membrane. This is an uncharacterized protein from Cryphonectria parasitica mycoreovirus 1 (strain 9B21) (CpMYRV-1).